Reading from the N-terminus, the 421-residue chain is MTESVLDYMTRLGRAAREASRVLARASTAQKNRALQAAAAALDAARDELVRANELDLAGGRANGLDAAMLDRLALTPKVIDGMIEGLRQVATLPDPIGAIRDMRYMPSGIQVGKMRVPLGVVGIIYESRPNVTIDAASLCLKSGNATILRGGSEAIHSNQAIARCIQLGLAEAGLPAAAVQVVDTTDRAAVGALISMPDYVDVIVPRGGKGLIERISRDARVPVIKHLDGICHVYVDLAADVDKAIRIADNAKTQRFAPCNTMETLLVHQGIAEQVLPPLAAIYRDKGVELRGCPRTRALLGNEVLAASEEDWSTEYNAPILSIRMLDSLDEAIEHINRYGSQHTDAIVTENFTDARRFLTEVDSASVMINASTRFADGFEYGLGAEIGISTDKLHARGPVGLEGLTSEKYVVFGDGHVRT.

This sequence belongs to the gamma-glutamyl phosphate reductase family.

The protein localises to the cytoplasm. It catalyses the reaction L-glutamate 5-semialdehyde + phosphate + NADP(+) = L-glutamyl 5-phosphate + NADPH + H(+). Its pathway is amino-acid biosynthesis; L-proline biosynthesis; L-glutamate 5-semialdehyde from L-glutamate: step 2/2. In terms of biological role, catalyzes the NADPH-dependent reduction of L-glutamate 5-phosphate into L-glutamate 5-semialdehyde and phosphate. The product spontaneously undergoes cyclization to form 1-pyrroline-5-carboxylate. The protein is Gamma-glutamyl phosphate reductase of Stutzerimonas stutzeri (strain A1501) (Pseudomonas stutzeri).